The chain runs to 30 residues: Putative UPF0377 protein YNR075C-A (30 aa).

The protein belongs to the UPF0377 family.

The sequence is that of Putative UPF0377 protein YNR075C-A from Saccharomyces cerevisiae (strain ATCC 204508 / S288c) (Baker's yeast).